A 444-amino-acid chain; its full sequence is Putative methylesterase 15, chloroplastic (444 aa).

Over residues 1 to 27 (MGNSLRCISQEQDPNQKKPSSVVNGNS) the composition is skewed to polar residues. 2 disordered regions span residues 1 to 36 (MGNS…RRLS) and 48 to 91 (PSLS…DSLI). Residues 1–58 (MGNSLRCISQEQDPNQKKPSSVVNGNSSEKHVRRLSLIPSFRRRTLLPSLSCSGSSTS) constitute a chloroplast transit peptide. Residues 53-63 (SGSSTSSTSKK) are compositionally biased toward low complexity. A compositionally biased stretch (basic residues) spans 64–80 (GGIKTKKKIRERHHQEQ). Residues 81–90 (HHHDHEKDSL) show a composition bias toward basic and acidic residues. Residues 188–312 (FVLVHGGGFG…QPDSNYDLME (125 aa)) form the AB hydrolase-1 domain. Residue aspartate 262 is the Acyl-ester intermediate of the active site. Catalysis depends on charge relay system residues aspartate 390 and histidine 418.

It belongs to the AB hydrolase superfamily. Methylesterase family.

The protein resides in the plastid. It localises to the chloroplast. Putative methylesterase. This is Putative methylesterase 15, chloroplastic from Arabidopsis thaliana (Mouse-ear cress).